The following is a 277-amino-acid chain: Large ribosomal subunit protein uL2 (277 aa).

2 disordered regions span residues 35–57 and 222–277; these read RPLH…QGGG and GVAM…NRRR. Composition is skewed to basic residues over residues 37–57 and 268–277; these read LHSK…QGGG and VRRRKQNRRR.

It belongs to the universal ribosomal protein uL2 family. As to quaternary structure, part of the 50S ribosomal subunit. Forms a bridge to the 30S subunit in the 70S ribosome.

In terms of biological role, one of the primary rRNA binding proteins. Required for association of the 30S and 50S subunits to form the 70S ribosome, for tRNA binding and peptide bond formation. It has been suggested to have peptidyltransferase activity; this is somewhat controversial. Makes several contacts with the 16S rRNA in the 70S ribosome. In Frankia casuarinae (strain DSM 45818 / CECT 9043 / HFP020203 / CcI3), this protein is Large ribosomal subunit protein uL2.